Here is a 223-residue protein sequence, read N- to C-terminus: GTP cyclohydrolase 1 (223 aa).

Zn(2+)-binding residues include C111, H114, and C182.

This sequence belongs to the GTP cyclohydrolase I family. Homomer.

It carries out the reaction GTP + H2O = 7,8-dihydroneopterin 3'-triphosphate + formate + H(+). It participates in cofactor biosynthesis; 7,8-dihydroneopterin triphosphate biosynthesis; 7,8-dihydroneopterin triphosphate from GTP: step 1/1. In Flavobacterium johnsoniae (strain ATCC 17061 / DSM 2064 / JCM 8514 / BCRC 14874 / CCUG 350202 / NBRC 14942 / NCIMB 11054 / UW101) (Cytophaga johnsonae), this protein is GTP cyclohydrolase 1.